We begin with the raw amino-acid sequence, 191 residues long: Heme-binding protein 1 (191 aa).

Belongs to the HEBP family. In terms of assembly, monomer.

It localises to the cytoplasm. May bind free porphyrinogens that may be present in the cell and thus facilitate removal of these potentially toxic compound. Binds with a high affinity to one molecule of heme or porphyrins. It binds metalloporphyrins, free porphyrins and N-methylprotoporphyrin with similar affinities. In Bos taurus (Bovine), this protein is Heme-binding protein 1 (HEBP1).